The primary structure comprises 1823 residues: THO complex subunit 2 (1823 aa).

Residues 935 to 1003 adopt a coiled-coil conformation; sequence NRYESEISKQ…RRRLSREKDT (69 aa). The Nuclear localization signal signature appears at 964 to 969; it reads KRKKEK. 2 disordered regions span residues 1244–1382 and 1394–1823; these read LVGV…KDLN and ALSS…GSRE. Composition is skewed to basic and acidic residues over residues 1272 to 1283, 1312 to 1330, and 1356 to 1367; these read QMLKTKPLDGRT, KSME…DENP, and AKQDFGKDDGKS. The span at 1394 to 1409 shows a compositional bias: polar residues; the sequence is ALSSTAANGSIATGSS. The segment covering 1432-1596 has biased composition (basic and acidic residues); sequence PRHEIVTSVR…EKSHPDDHFH (165 aa). Pro residues predominate over residues 1600-1610; it reads LPPPPPLPPNI. Basic and acidic residues-rich tracts occupy residues 1616–1625, 1636–1648, 1655–1706, and 1768–1785; these read AAKEDLERRA, PRHE…RSEE, DDAK…FEAS, and LGKE…DPIA. Phosphoserine is present on residues Ser1646 and Ser1696. Over residues 1802 to 1816 the composition is skewed to polar residues; sequence MTVNGKTTRGEQSGS.

This sequence belongs to the THOC2 family. In terms of assembly, component of the THO complex, which is composed of THO1, THO2, THO3, THO5, THO6 and THO7.

It localises to the nucleus. In terms of biological role, acts as a component of the THO subcomplex of the TREX complex which is thought to couple mRNA transcription, processing and nuclear export. The sequence is that of THO complex subunit 2 (THO2) from Arabidopsis thaliana (Mouse-ear cress).